We begin with the raw amino-acid sequence, 361 residues long: Peptide chain release factor 1 (361 aa).

Gln237 carries the N5-methylglutamine modification. Basic and acidic residues predominate over residues 287-297; it reads KQQKEQSDTRK. Residues 287–313 are disordered; sequence KQQKEQSDTRKSLVGSGDRSERIRTYN.

The protein belongs to the prokaryotic/mitochondrial release factor family. Methylated by PrmC. Methylation increases the termination efficiency of RF1.

It localises to the cytoplasm. Its function is as follows. Peptide chain release factor 1 directs the termination of translation in response to the peptide chain termination codons UAG and UAA. The chain is Peptide chain release factor 1 from Francisella tularensis subsp. holarctica (strain FTNF002-00 / FTA).